A 258-amino-acid polypeptide reads, in one-letter code: Acyl-[acyl-carrier-protein]--UDP-N-acetylglucosamine O-acyltransferase (258 aa).

This sequence belongs to the transferase hexapeptide repeat family. LpxA subfamily. In terms of assembly, homotrimer.

The protein resides in the cytoplasm. It catalyses the reaction a (3R)-hydroxyacyl-[ACP] + UDP-N-acetyl-alpha-D-glucosamine = a UDP-3-O-[(3R)-3-hydroxyacyl]-N-acetyl-alpha-D-glucosamine + holo-[ACP]. It functions in the pathway glycolipid biosynthesis; lipid IV(A) biosynthesis; lipid IV(A) from (3R)-3-hydroxytetradecanoyl-[acyl-carrier-protein] and UDP-N-acetyl-alpha-D-glucosamine: step 1/6. Functionally, involved in the biosynthesis of lipid A, a phosphorylated glycolipid that anchors the lipopolysaccharide to the outer membrane of the cell. The sequence is that of Acyl-[acyl-carrier-protein]--UDP-N-acetylglucosamine O-acyltransferase from Pseudomonas savastanoi pv. phaseolicola (strain 1448A / Race 6) (Pseudomonas syringae pv. phaseolicola (strain 1448A / Race 6)).